A 480-amino-acid polypeptide reads, in one-letter code: Ribulose bisphosphate carboxylase large chain (480 aa).

The propeptide occupies 1–2 (MS). Position 3 is an N-acetylproline (Pro3). Residue Lys14 is modified to N6,N6,N6-trimethyllysine. Residues Asn123 and Thr173 each coordinate substrate. Lys175 serves as the catalytic Proton acceptor. Lys177 serves as a coordination point for substrate. Residues Lys201, Asp203, and Glu204 each coordinate Mg(2+). Lys201 is subject to N6-carboxylysine. The Proton acceptor role is filled by His294. Residues Arg295, His327, and Ser379 each coordinate substrate.

It belongs to the RuBisCO large chain family. Type I subfamily. As to quaternary structure, heterohexadecamer of 8 large chains and 8 small chains; disulfide-linked. The disulfide link is formed within the large subunit homodimers. It depends on Mg(2+) as a cofactor. Post-translationally, the disulfide bond which can form in the large chain dimeric partners within the hexadecamer appears to be associated with oxidative stress and protein turnover.

The protein resides in the plastid. It is found in the chloroplast. It catalyses the reaction 2 (2R)-3-phosphoglycerate + 2 H(+) = D-ribulose 1,5-bisphosphate + CO2 + H2O. The enzyme catalyses D-ribulose 1,5-bisphosphate + O2 = 2-phosphoglycolate + (2R)-3-phosphoglycerate + 2 H(+). Functionally, ruBisCO catalyzes two reactions: the carboxylation of D-ribulose 1,5-bisphosphate, the primary event in carbon dioxide fixation, as well as the oxidative fragmentation of the pentose substrate in the photorespiration process. Both reactions occur simultaneously and in competition at the same active site. This Basella alba (Malabar spinach) protein is Ribulose bisphosphate carboxylase large chain.